A 548-amino-acid chain; its full sequence is Probable manganese-dependent inorganic pyrophosphatase (548 aa).

Residues 1–74 are PPase part 1; that stretch reads MKALERVYVI…HIETLEPTVE (74 aa). Mn(2+)-binding residues include His12, Asp16, and Asp18. CBS domains follow at residues 77–132 and 254–311; these read ELKN…RLKI and MSKK…VILV. Residues 306-548 form a PPase part 2 region; the sequence is KKVILVDHNE…KIGEVLRRER (243 aa). Mn(2+) is bound by residues Asp312, His334, and Asp386.

This sequence belongs to the PPase class C family. Requires Mn(2+) as cofactor.

It is found in the cytoplasm. The enzyme catalyses diphosphate + H2O = 2 phosphate + H(+). The polypeptide is Probable manganese-dependent inorganic pyrophosphatase (ppaC) (Thermotoga maritima (strain ATCC 43589 / DSM 3109 / JCM 10099 / NBRC 100826 / MSB8)).